The following is a 61-amino-acid chain: Small ribosomal subunit protein uS14B (61 aa).

Residues Cys24, Cys27, Cys40, and Cys43 each contribute to the Zn(2+) site.

Belongs to the universal ribosomal protein uS14 family. Zinc-binding uS14 subfamily. In terms of assembly, part of the 30S ribosomal subunit. Contacts proteins S3 and S10. The cofactor is Zn(2+).

Functionally, binds 16S rRNA, required for the assembly of 30S particles and may also be responsible for determining the conformation of the 16S rRNA at the A site. The protein is Small ribosomal subunit protein uS14B of Pediococcus pentosaceus (strain ATCC 25745 / CCUG 21536 / LMG 10740 / 183-1w).